The primary structure comprises 534 residues: Cytochrome P450 monooxygenase btcB (534 aa).

N-linked (GlcNAc...) asparagine glycosylation occurs at N20. A helical membrane pass occupies residues 41 to 61 (ALAFLCGALLFGFVYSVFYNL). Residues N335, N413, and N431 are each glycosylated (N-linked (GlcNAc...) asparagine). C484 provides a ligand contact to heme.

Belongs to the cytochrome P450 family. Requires heme as cofactor.

The protein resides in the membrane. The protein operates within secondary metabolite biosynthesis; terpenoid biosynthesis. Cytochrome P4590 monooxygenase part of the gene cluster that mediates the biosynthesis of betaestacins. The bifunctional terpene synthase btcA converts isopentenyl diphosphate (IPP) and dimethylallyl diphosphate (DMAPP) into the sesterterpene betaestacin I. The C-terminal prenyltransferase (PT) domain of btcA catalyzes formation of GFPP, whereas the N-terminal terpene cyclase (TC) domain catalyzes the cyclization of GFPP into betaestacin I. The cytochrome P450 monooxygenase btcB oxidizes the C25 methyl group of betaestacin I to yield the carboxylic acid betaestacin IV via the alcohol betaestacin III. The cytochrome P450 monooxygenase btcC further catalyzes the multistep oxidation of betaestacin IV to produce several compounds, including betaestacins Va, Vb, Vc and VI. The chain is Cytochrome P450 monooxygenase btcB from Colletotrichum orbiculare (strain 104-T / ATCC 96160 / CBS 514.97 / LARS 414 / MAFF 240422) (Cucumber anthracnose fungus).